The primary structure comprises 471 residues: Monocarboxylate transporter 11 (471 aa).

A compositionally biased stretch (basic residues) spans methionine 1–phenylalanine 13. The segment at methionine 1–glycine 31 is disordered. Topologically, residues methionine 1–glycine 35 are cytoplasmic. Positions proline 19–glutamine 28 are enriched in low complexity. Helical transmembrane passes span glycine 36–leucine 56, alanine 78–leucine 98, proline 106–serine 126, leucine 131–leucine 151, valine 163–alanine 183, leucine 198–valine 218, alanine 243–valine 263, glycine 273–alanine 293, leucine 312–valine 332, glycine 333–alanine 353, leucine 367–leucine 389, and alanine 407–proline 427. The Cytoplasmic portion of the chain corresponds to arginine 428 to cysteine 471.

The protein belongs to the major facilitator superfamily. Monocarboxylate porter (TC 2.A.1.13) family. In terms of assembly, interacts with isoform 2 of BSG. In terms of tissue distribution, expressed in liver, salivary gland and thyroid.

It is found in the endoplasmic reticulum membrane. The protein resides in the cell membrane. It catalyses the reaction pyruvate(out) + H(+)(out) = pyruvate(in) + H(+)(in). Its function is as follows. Proton-linked monocarboxylate transporter. It catalyzes the transport of pyruvate across the plasma membrane. Probably involved in hepatic lipid metabolism: overexpression results in an increase of triacylglycerol(TAG) levels, small increases in intracellular diacylglycerols and decreases in lysophosphatidylcholine, cholesterol ester and sphingomyelin lipids. The protein is Monocarboxylate transporter 11 (SLC16A11) of Homo sapiens (Human).